A 762-amino-acid polypeptide reads, in one-letter code: Anhydrosialidase (762 aa).

The N-terminal stretch at 1–27 (MGRIGKKAMAIALVSAVMVTPLNVCAT) is a signal peptide. A substrate-binding site is contributed by R293. D318 functions as the Proton acceptor in the catalytic mechanism. BNR repeat units lie at residues 328 to 339 (AKSTDGGNTWSE), 511 to 522 (RYSDDEGASWSD), and 571 to 582 (MYSDDHGDNWTY). The active site involves E595. R611 contacts substrate. The stretch at 620–631 (VTSIDGGETWSD) is one BNR 4 repeat. R673 provides a ligand contact to substrate. Y713 (nucleophile) is an active-site residue.

It belongs to the glycosyl hydrolase 33 family.

Its subcellular location is the secreted. The protein localises to the extracellular space. It carries out the reaction Elimination of alpha-sialyl groups in N-acetylneuraminic acid glycosides, releasing 2,7-anhydro-alpha-N-acetylneuraminate.. The chain is Anhydrosialidase from Macrobdella decora (North American leech).